The primary structure comprises 399 residues: MIQLIGIKSQCDIGIRQKFSITSEVLEGKLKYINELVGSVLILSTCNRTEIYVDSNLEEKKLIDTVFYGLDWDYDLVSYIFYIKDKYAIKHLMEVSCGFHSKILGEDQILGQIKTAYDAALEAKTIKGKLQRLFQKAITCGKEFKHICESYRIPVSIPSIVAKEILNMDIRKYMIIGFGKIGQLLFKYLNNSQAQIIYIAVRDLNKVHDSYKKCGKIRFISFKDRKSYYNDIDCIVSCTSAPDKIISKGDLPCRKLTIFDLAVPEDIDRNVLDLDNVTLYDIDNISVIDEKNKAIRKKTMGKYRYILENHIDKFIKWEKLHQLSPEIQKVKKYGDEICEKRITTFKNKKHTKDNDILVKTMIESTARFYINRAIEVMKEEKLNGREEECLRLINKIFCK.

Substrate contacts are provided by residues 45 to 48, Ser-101, 106 to 108, and Gln-112; these read TCNR and EDQ. Cys-46 functions as the Nucleophile in the catalytic mechanism. NADP(+) is bound at residue 177–182; the sequence is GFGKIG.

This sequence belongs to the glutamyl-tRNA reductase family. Homodimer.

It carries out the reaction (S)-4-amino-5-oxopentanoate + tRNA(Glu) + NADP(+) = L-glutamyl-tRNA(Glu) + NADPH + H(+). It functions in the pathway porphyrin-containing compound metabolism; protoporphyrin-IX biosynthesis; 5-aminolevulinate from L-glutamyl-tRNA(Glu): step 1/2. Catalyzes the NADPH-dependent reduction of glutamyl-tRNA(Glu) to glutamate 1-semialdehyde (GSA). The polypeptide is Glutamyl-tRNA reductase (Clostridium kluyveri (strain ATCC 8527 / DSM 555 / NBRC 12016 / NCIMB 10680 / K1)).